We begin with the raw amino-acid sequence, 173 residues long: GTP-dependent dephospho-CoA kinase (173 aa).

Positions 52, 53, 54, 71, 73, and 122 each coordinate GTP.

The protein belongs to the GTP-dependent DPCK family.

The catalysed reaction is 3'-dephospho-CoA + GTP = GDP + CoA + H(+). It participates in cofactor biosynthesis; coenzyme A biosynthesis. Catalyzes the GTP-dependent phosphorylation of the 3'-hydroxyl group of dephosphocoenzyme A to form coenzyme A (CoA). This is GTP-dependent dephospho-CoA kinase from Metallosphaera sedula (strain ATCC 51363 / DSM 5348 / JCM 9185 / NBRC 15509 / TH2).